The chain runs to 307 residues: Elongation factor Ts (307 aa).

Residues 80–83 (TDFV) are involved in Mg(2+) ion dislocation from EF-Tu.

It belongs to the EF-Ts family.

The protein localises to the cytoplasm. Associates with the EF-Tu.GDP complex and induces the exchange of GDP to GTP. It remains bound to the aminoacyl-tRNA.EF-Tu.GTP complex up to the GTP hydrolysis stage on the ribosome. In Methylobacterium nodulans (strain LMG 21967 / CNCM I-2342 / ORS 2060), this protein is Elongation factor Ts.